The sequence spans 784 residues: Homoaconitase, mitochondrial (784 aa).

The transit peptide at 1–32 directs the protein to the mitochondrion; it reads MIHPVRRALAVAASRAPRQFLAAASRTTSVRS. Cysteine 399, cysteine 468, and cysteine 471 together coordinate [4Fe-4S] cluster. The disordered stretch occupies residues 572–596; it reads EAGLTPESTSSSSSSSSSSEEESLT. Low complexity predominate over residues 578-589; that stretch reads ESTSSSSSSSSS.

It belongs to the aconitase/IPM isomerase family. Requires [4Fe-4S] cluster as cofactor.

Its subcellular location is the mitochondrion. The enzyme catalyses (2R,3S)-homoisocitrate = cis-homoaconitate + H2O. The protein operates within amino-acid biosynthesis; L-lysine biosynthesis via AAA pathway; L-alpha-aminoadipate from 2-oxoglutarate: step 3/5. Its function is as follows. Catalyzes the reversible hydration of cis-homoaconitate to (2R,3S)-homoisocitrate, a step in the alpha-aminoadipate pathway for lysine biosynthesis. The polypeptide is Homoaconitase, mitochondrial (lys-4) (Neurospora crassa (strain ATCC 24698 / 74-OR23-1A / CBS 708.71 / DSM 1257 / FGSC 987)).